Here is a 450-residue protein sequence, read N- to C-terminus: Oxygen-independent coproporphyrinogen III oxidase (450 aa).

The region spanning 42–276 (LPAGASASLY…CAIANALKEA (235 aa)) is the Radical SAM core domain. Tyrosine 51 contributes to the S-adenosyl-L-methionine binding site. Cysteine 57 and cysteine 61 together coordinate [4Fe-4S] cluster. S-adenosyl-L-methionine is bound at residue tyrosine 63. Position 64 (cysteine 64) interacts with [4Fe-4S] cluster. S-adenosyl-L-methionine contacts are provided by residues glycine 108, 109–110 (GT), glutamate 141, glutamine 168, arginine 180, aspartate 205, alanine 239, and isoleucine 325.

The protein belongs to the anaerobic coproporphyrinogen-III oxidase family. As to quaternary structure, monomer. Requires [4Fe-4S] cluster as cofactor.

The protein resides in the cytoplasm. It carries out the reaction coproporphyrinogen III + 2 S-adenosyl-L-methionine = protoporphyrinogen IX + 2 5'-deoxyadenosine + 2 L-methionine + 2 CO2. It functions in the pathway porphyrin-containing compound metabolism; protoporphyrin-IX biosynthesis; protoporphyrinogen-IX from coproporphyrinogen-III (AdoMet route): step 1/1. Its function is as follows. Involved in the heme biosynthesis. Catalyzes the anaerobic oxidative decarboxylation of propionate groups of rings A and B of coproporphyrinogen III to yield the vinyl groups in protoporphyrinogen IX. The sequence is that of Oxygen-independent coproporphyrinogen III oxidase (hemN) from Bradyrhizobium diazoefficiens (strain JCM 10833 / BCRC 13528 / IAM 13628 / NBRC 14792 / USDA 110).